The following is a 720-amino-acid chain: Polyribonucleotide nucleotidyltransferase (720 aa).

Mg(2+)-binding residues include Asp487 and Asp493. A KH domain is found at Pro554–Ile613. Positions Gly623–Lys691 constitute an S1 motif domain. Residues Gln695–Asp720 are disordered. The span at Glu706–Asp720 shows a compositional bias: basic and acidic residues.

The protein belongs to the polyribonucleotide nucleotidyltransferase family. Mg(2+) serves as cofactor.

The protein localises to the cytoplasm. It carries out the reaction RNA(n+1) + phosphate = RNA(n) + a ribonucleoside 5'-diphosphate. In terms of biological role, involved in mRNA degradation. Catalyzes the phosphorolysis of single-stranded polyribonucleotides processively in the 3'- to 5'-direction. The chain is Polyribonucleotide nucleotidyltransferase from Paramagnetospirillum magneticum (strain ATCC 700264 / AMB-1) (Magnetospirillum magneticum).